A 437-amino-acid polypeptide reads, in one-letter code: tRNA(Ile)-lysidine synthase (437 aa).

22-27 (SGGLDS) contacts ATP.

It belongs to the tRNA(Ile)-lysidine synthase family.

It localises to the cytoplasm. The enzyme catalyses cytidine(34) in tRNA(Ile2) + L-lysine + ATP = lysidine(34) in tRNA(Ile2) + AMP + diphosphate + H(+). Ligates lysine onto the cytidine present at position 34 of the AUA codon-specific tRNA(Ile) that contains the anticodon CAU, in an ATP-dependent manner. Cytidine is converted to lysidine, thus changing the amino acid specificity of the tRNA from methionine to isoleucine. The sequence is that of tRNA(Ile)-lysidine synthase from Xylella fastidiosa (strain 9a5c).